The following is an 87-amino-acid chain: MKILFLIILTAFFIGVHCKHGYPIIRAGRDKGCKVSCVINNQYCDTECKQLKGRRGYCYFWRLACFCEYLPDYVPTWSRATNKCKAK.

Positions 1–18 (MKILFLIILTAFFIGVHC) are cleaved as a signal peptide. An LCN-type CS-alpha/beta domain is found at 19 to 85 (KHGYPIIRAG…TWSRATNKCK (67 aa)). 4 disulfides stabilise this stretch: cysteine 33-cysteine 84, cysteine 37-cysteine 58, cysteine 44-cysteine 65, and cysteine 48-cysteine 67. Cysteine amide is present on cysteine 84.

This sequence belongs to the long (4 C-C) scorpion toxin superfamily. Sodium channel inhibitor family. Beta subfamily. As to expression, expressed by the venom gland.

The protein resides in the secreted. Binds voltage-independently at site-4 of sodium channels (Nav) and shift the voltage of activation toward more negative potentials thereby affecting sodium channel activation and promoting spontaneous and repetitive firing. The polypeptide is Neurotoxin LmNaTx64.1 (Lychas mucronatus (Chinese swimming scorpion)).